The chain runs to 197 residues: Ribosomal RNA large subunit methyltransferase E (197 aa).

5 residues coordinate S-adenosyl-L-methionine: glycine 50, tryptophan 52, aspartate 67, aspartate 83, and aspartate 111. Residue lysine 151 is the Proton acceptor of the active site.

It belongs to the class I-like SAM-binding methyltransferase superfamily. RNA methyltransferase RlmE family.

The protein resides in the cytoplasm. The catalysed reaction is uridine(2552) in 23S rRNA + S-adenosyl-L-methionine = 2'-O-methyluridine(2552) in 23S rRNA + S-adenosyl-L-homocysteine + H(+). Functionally, specifically methylates the uridine in position 2552 of 23S rRNA at the 2'-O position of the ribose in the fully assembled 50S ribosomal subunit. In Thermoplasma volcanium (strain ATCC 51530 / DSM 4299 / JCM 9571 / NBRC 15438 / GSS1), this protein is Ribosomal RNA large subunit methyltransferase E.